Reading from the N-terminus, the 380-residue chain is GTP-binding protein 10 (380 aa).

Residues 13–148 enclose the Obg domain; the sequence is GNFVDNVRLY…RNIRLDLKLI (136 aa). Positions 149–344 constitute an OBG-type G domain; sequence ADFGLVGFPN…LKSLIRQSLE (196 aa). GTP contacts are provided by residues 155–162, 202–206, and 278–281; these read GFPNAGKS, DLPGL, and NKMD.

It belongs to the TRAFAC class OBG-HflX-like GTPase superfamily. OBG GTPase family.

It localises to the nucleus. It is found in the nucleolus. In terms of biological role, may be involved in the ribosome maturation process. This is GTP-binding protein 10 (gtpbp10) from Danio rerio (Zebrafish).